The sequence spans 529 residues: Listeriolysin O (529 aa).

The signal sequence occupies residues 1–24; it reads MKKIMLVFITLILVSLPIAQQTEA. The disordered stretch occupies residues 35 to 54; that stretch reads SISSMAPPASPPASPKTPIE. Transmembrane regions (beta stranded) follow at residues 214–227, 234–243, 312–321, and 329–341; these read ESQL…AFKA, VNFGAISEGK, STKVKAAFDA, and SGDV…IKNS. The Conserved undecapeptide signature appears at 483-493; sequence ECTGLAWEWWR. The Cholesterol binding signature appears at 515–516; it reads TL.

It belongs to the cholesterol-dependent cytolysin family. In terms of assembly, homooligomeric pore complex of 35 to 50 subunits; when inserted in the host membrane.

The protein localises to the secreted. The protein resides in the host membrane. It is found in the host cell membrane. Its activity is regulated as follows. Activity of listeriolysin O is regulated on multiple levels. It should be high in the phagosome, thereby allowing escape of the bacteria from the phagosomal compartment. Then, once inside the host cytosol, the activity must be controlled to prevent lysis of the host plasma membrane and loss of the intracellular environment. A cholesterol-dependent toxin that causes cytolysis by forming pores in cholesterol containing host membranes. After binding to target membranes, the protein undergoes a major conformation change, leading to its insertion in the host membrane and formation of an oligomeric pore complex. Cholesterol is required for binding to host membranes, membrane insertion and pore formation; cholesterol binding is mediated by a Thr-Leu pair in the C-terminus. Acts as a major virulence factor required for the escape of bacteria from phagosomal vacuoles and entry into the host cytosol. Can be reversibly inactivated by oxidation. This Listeria monocytogenes serotype 1/2a (strain 08-5578) protein is Listeriolysin O (hly).